A 497-amino-acid chain; its full sequence is Signal recognition particle receptor FtsY (497 aa).

Disordered stretches follow at residues 1-63 (MAKE…TEAE) and 79-130 (AESE…EWQA). Positions 87 to 96 (EAEVVAQPEP) are enriched in low complexity. GTP is bound by residues 300-307 (GVNGVGKT), 382-386 (DTAGR), and 446-449 (TKLD).

Belongs to the GTP-binding SRP family. FtsY subfamily. In terms of assembly, part of the signal recognition particle protein translocation system, which is composed of SRP and FtsY. SRP is a ribonucleoprotein composed of Ffh and a 4.5S RNA molecule. Binds to SecY. Proteolytically cleaved. The cleavage may regulate function and subcellular location of FtsY. Full-length FtsY is found primarily associated with the membrane, while cleaved protein is predominantly present in the cytoplasm.

Its subcellular location is the cell inner membrane. It localises to the cytoplasm. The catalysed reaction is GTP + H2O = GDP + phosphate + H(+). Conformation of the Ffh-FtsY complex and regulation of its GTPase activity are modulated by the 4.5S RNA. Formation of the FfH-FtsY complex leads to a mutual stimulation of both GTPases. In terms of biological role, involved in targeting and insertion of nascent membrane proteins into the cytoplasmic membrane. Acts as a receptor for the complex formed by the signal recognition particle (SRP) and the ribosome-nascent chain (RNC). Interaction with SRP-RNC leads to the transfer of the RNC complex to the Sec translocase for insertion into the membrane, the hydrolysis of GTP by both Ffh and FtsY, and the dissociation of the SRP-FtsY complex into the individual components. The polypeptide is Signal recognition particle receptor FtsY (Escherichia coli (strain K12)).